Consider the following 187-residue polypeptide: uncharacterized protein (187 aa).

This is an uncharacterized protein from Saccharomyces cerevisiae (strain ATCC 204508 / S288c) (Baker's yeast).